The chain runs to 676 residues: UvrABC system protein B (676 aa).

Positions 35 to 192 constitute a Helicase ATP-binding domain; it reads QGVADGLMYQ…ARLVAMQYTR (158 aa). 48-55 serves as a coordination point for ATP; that stretch reads GVTGSGKT. A Beta-hairpin motif is present at residues 101 to 124; it reads YYDYYQPEAYVPTRDLFIEKDSSV. The Helicase C-terminal domain maps to 439–605; it reads QVDDLLGEIR…GVNKAVRELI (167 aa). The UVR domain occupies 634–669; sequence AREIKRLEKLMMDHARNLEFEQAAAARDALTALKNR.

It belongs to the UvrB family. As to quaternary structure, forms a heterotetramer with UvrA during the search for lesions. Interacts with UvrC in an incision complex.

The protein resides in the cytoplasm. In terms of biological role, the UvrABC repair system catalyzes the recognition and processing of DNA lesions. A damage recognition complex composed of 2 UvrA and 2 UvrB subunits scans DNA for abnormalities. Upon binding of the UvrA(2)B(2) complex to a putative damaged site, the DNA wraps around one UvrB monomer. DNA wrap is dependent on ATP binding by UvrB and probably causes local melting of the DNA helix, facilitating insertion of UvrB beta-hairpin between the DNA strands. Then UvrB probes one DNA strand for the presence of a lesion. If a lesion is found the UvrA subunits dissociate and the UvrB-DNA preincision complex is formed. This complex is subsequently bound by UvrC and the second UvrB is released. If no lesion is found, the DNA wraps around the other UvrB subunit that will check the other stand for damage. The chain is UvrABC system protein B from Bordetella avium (strain 197N).